A 269-amino-acid chain; its full sequence is Putative carbamate hydrolase RutD (269 aa).

The 119-residue stretch at 26-144 folds into the AB hydrolase-1 domain; the sequence is VVLLSSGLGG…CFDTRLHLLN (119 aa).

The protein belongs to the AB hydrolase superfamily. Hydrolase RutD family.

The enzyme catalyses carbamate + 2 H(+) = NH4(+) + CO2. Involved in pyrimidine catabolism. May facilitate the hydrolysis of carbamate, a reaction that can also occur spontaneously. This chain is Putative carbamate hydrolase RutD, found in Caulobacter vibrioides (strain ATCC 19089 / CIP 103742 / CB 15) (Caulobacter crescentus).